The sequence spans 517 residues: Cytochrome P450 monooxygenase bsc11 (517 aa).

A helical membrane pass occupies residues 16 to 33; sequence ALPLTCTGLIIIFAFYLS. Residue N204 is glycosylated (N-linked (GlcNAc...) asparagine). C448 is a binding site for heme.

The protein belongs to the cytochrome P450 family. Requires heme as cofactor.

Its subcellular location is the membrane. It participates in mycotoxin biosynthesis. In terms of biological role, cytochrome P450 monooxygenase; part of the gene cluster that mediates the biosynthesis of the diterpene glucoside brassicicene C. In the first step of the brassicicene C biosynthesis, the bifunctional diterpene synthase bsc8 that possesses both prenyl transferase and terpene cyclase activity, converts isopentenyl diphosphate and dimethylallyl diphosphate into geranylgeranyl diphosphate (GGDP) that is further converted into fusicocca-2,10(14)-diene, the first precursor for brassicicene C. Fusicocca-2,10(14)-diene is then substrate of cytochrome P450 monooxygenase bsc1 for hydroxylation at the C-8 position. Oxidation at C-16 position to aldehyde is then catalyzed by the cytochrome P450 monooyxygenase bsc7, yielding fusicocca-2,10(14)-diene-8-beta,16-diol. Follows the isomerization of the double bond and reduction of aldehyde to alcohol catalyzed by the short-chain dehydrogenase/reductase bsc3 to yield the diol compound fusicocca-1,10(14)-diene-8 beta,16-diol. The next step is the oxidation at the C-3 position of fusicocca-2,10(14)-diene-8-beta,16-diol catalyzed by the alpha-ketoglutarate dependent dioxygenase bsc9, to produce a triol compound. Methylation of the hydroxy group at position 16 is performed by the methyltransferase bsc6. 16-O-methylation is followed by oxidation at the C-13 position to ketone and an alkyl shift of the methyl group leads to brassicicene C. Although the probable acetyltransferase bsc4 is included in the gene cluster, no acetylation reactions are necessary for brassicicene C biosynthesis. However, the fact that brassicicene E, which is a structurally related compound having an acetoxy group at position 12, was previously isolated from another strain of A.brassicicola suggests that the ATCC 96836 strain might also produce a small amount of brassicicene E. The chain is Cytochrome P450 monooxygenase bsc11 from Alternaria brassicicola (Dark leaf spot agent).